Here is a 183-residue protein sequence, read N- to C-terminus: Translation initiation factor IF-3 (183 aa).

This sequence belongs to the IF-3 family. In terms of assembly, monomer.

It is found in the cytoplasm. Functionally, IF-3 binds to the 30S ribosomal subunit and shifts the equilibrium between 70S ribosomes and their 50S and 30S subunits in favor of the free subunits, thus enhancing the availability of 30S subunits on which protein synthesis initiation begins. The polypeptide is Translation initiation factor IF-3 (Pseudomonas syringae pv. tomato (strain ATCC BAA-871 / DC3000)).